The primary structure comprises 62 residues: Protein DsrB (62 aa).

This sequence belongs to the DsrB family.

This is Protein DsrB from Shigella boydii serotype 18 (strain CDC 3083-94 / BS512).